Consider the following 370-residue polypeptide: DNA replication and repair protein RecF (370 aa).

30–37 serves as a coordination point for ATP; sequence GENAQGKT.

This sequence belongs to the RecF family.

The protein localises to the cytoplasm. Functionally, the RecF protein is involved in DNA metabolism; it is required for DNA replication and normal SOS inducibility. RecF binds preferentially to single-stranded, linear DNA. It also seems to bind ATP. This chain is DNA replication and repair protein RecF, found in Staphylococcus aureus (strain USA300).